Reading from the N-terminus, the 190-residue chain is NADH-quinone oxidoreductase subunit B (190 aa).

[4Fe-4S] cluster is bound by residues Cys39, Cys40, Cys104, and Cys135.

It belongs to the complex I 20 kDa subunit family. NDH-1 is composed of 14 different subunits. Subunits NuoB, C, D, E, F, and G constitute the peripheral sector of the complex. The cofactor is [4Fe-4S] cluster.

It localises to the cell inner membrane. The enzyme catalyses a quinone + NADH + 5 H(+)(in) = a quinol + NAD(+) + 4 H(+)(out). NDH-1 shuttles electrons from NADH, via FMN and iron-sulfur (Fe-S) centers, to quinones in the respiratory chain. The immediate electron acceptor for the enzyme in this species is believed to be a menaquinone. Couples the redox reaction to proton translocation (for every two electrons transferred, four hydrogen ions are translocated across the cytoplasmic membrane), and thus conserves the redox energy in a proton gradient. This Chlorobium phaeobacteroides (strain BS1) protein is NADH-quinone oxidoreductase subunit B.